A 211-amino-acid polypeptide reads, in one-letter code: Uracil phosphoribosyltransferase (211 aa).

Residues R77, R102, and 129 to 137 (DPMLATGGS) contribute to the 5-phospho-alpha-D-ribose 1-diphosphate site. Uracil is bound by residues I192 and 197–199 (GDA). D198 provides a ligand contact to 5-phospho-alpha-D-ribose 1-diphosphate.

Belongs to the UPRTase family. Mg(2+) serves as cofactor.

It catalyses the reaction UMP + diphosphate = 5-phospho-alpha-D-ribose 1-diphosphate + uracil. It participates in pyrimidine metabolism; UMP biosynthesis via salvage pathway; UMP from uracil: step 1/1. Allosterically activated by GTP. Functionally, catalyzes the conversion of uracil and 5-phospho-alpha-D-ribose 1-diphosphate (PRPP) to UMP and diphosphate. The polypeptide is Uracil phosphoribosyltransferase (Corynebacterium diphtheriae (strain ATCC 700971 / NCTC 13129 / Biotype gravis)).